Consider the following 112-residue polypeptide: S-adenosylmethionine decarboxylase proenzyme (112 aa).

The active-site Schiff-base intermediate with substrate; via pyruvic acid is the Ser62. Ser62 carries the post-translational modification Pyruvic acid (Ser); by autocatalysis. Residue His67 is the Proton acceptor; for processing activity of the active site. Catalysis depends on Cys82, which acts as the Proton donor; for catalytic activity.

Belongs to the prokaryotic AdoMetDC family. Type 1 subfamily. As to quaternary structure, heterotetramer of two alpha and two beta chains arranged as a dimer of alpha/beta heterodimers. The cofactor is pyruvate. In terms of processing, is synthesized initially as an inactive proenzyme. Formation of the active enzyme involves a self-maturation process in which the active site pyruvoyl group is generated from an internal serine residue via an autocatalytic post-translational modification. Two non-identical subunits are generated from the proenzyme in this reaction, and the pyruvate is formed at the N-terminus of the alpha chain, which is derived from the carboxyl end of the proenzyme. The post-translation cleavage follows an unusual pathway, termed non-hydrolytic serinolysis, in which the side chain hydroxyl group of the serine supplies its oxygen atom to form the C-terminus of the beta chain, while the remainder of the serine residue undergoes an oxidative deamination to produce ammonia and the pyruvoyl group blocking the N-terminus of the alpha chain.

It carries out the reaction S-adenosyl-L-methionine + H(+) = S-adenosyl 3-(methylsulfanyl)propylamine + CO2. Its pathway is amine and polyamine biosynthesis; S-adenosylmethioninamine biosynthesis; S-adenosylmethioninamine from S-adenosyl-L-methionine: step 1/1. In terms of biological role, catalyzes the decarboxylation of S-adenosylmethionine to S-adenosylmethioninamine (dcAdoMet), the propylamine donor required for the synthesis of the polyamines spermine and spermidine from the diamine putrescine. This Archaeoglobus fulgidus (strain ATCC 49558 / DSM 4304 / JCM 9628 / NBRC 100126 / VC-16) protein is S-adenosylmethionine decarboxylase proenzyme.